The sequence spans 314 residues: GTP cyclohydrolase FolE2 (314 aa).

The disordered stretch occupies residues 290-314; sequence DASAWSAPQASAPDQQESFATGNER. Positions 291–305 are enriched in low complexity; the sequence is ASAWSAPQASAPDQQ.

Belongs to the GTP cyclohydrolase IV family.

The catalysed reaction is GTP + H2O = 7,8-dihydroneopterin 3'-triphosphate + formate + H(+). It participates in cofactor biosynthesis; 7,8-dihydroneopterin triphosphate biosynthesis; 7,8-dihydroneopterin triphosphate from GTP: step 1/1. In terms of biological role, converts GTP to 7,8-dihydroneopterin triphosphate. This is GTP cyclohydrolase FolE2 from Pseudomonas putida (strain ATCC 700007 / DSM 6899 / JCM 31910 / BCRC 17059 / LMG 24140 / F1).